Consider the following 130-residue polypeptide: Cytochrome b-c1 complex subunit 7 (130 aa).

It belongs to the UQCRB/QCR7 family. As to quaternary structure, component of the ubiquinol-cytochrome c oxidoreductase (cytochrome b-c1 complex, complex III, CIII), a multisubunit enzyme composed of 3 respiratory subunits cytochrome b, cytochrome c1 and Rieske protein, 2 core protein subunits, and additional low-molecular weight protein subunits. The complex exists as an obligatory dimer and forms supercomplexes (SCs) in the inner mitochondrial membrane with cytochrome c oxidase (complex IV, CIV).

It localises to the mitochondrion inner membrane. Component of the ubiquinol-cytochrome c oxidoreductase, a multisubunit transmembrane complex that is part of the mitochondrial electron transport chain which drives oxidative phosphorylation. The respiratory chain contains 3 multisubunit complexes succinate dehydrogenase (complex II, CII), ubiquinol-cytochrome c oxidoreductase (cytochrome b-c1 complex, complex III, CIII) and cytochrome c oxidase (complex IV, CIV), that cooperate to transfer electrons derived from NADH and succinate to molecular oxygen, creating an electrochemical gradient over the inner membrane that drives transmembrane transport and the ATP synthase. The cytochrome b-c1 complex catalyzes electron transfer from ubiquinol to cytochrome c, linking this redox reaction to translocation of protons across the mitochondrial inner membrane, with protons being carried across the membrane as hydrogens on the quinol. In the process called Q cycle, 2 protons are consumed from the matrix, 4 protons are released into the intermembrane space and 2 electrons are passed to cytochrome c. The chain is Cytochrome b-c1 complex subunit 7 from Schistosoma mansoni (Blood fluke).